Consider the following 357-residue polypeptide: Isopentenyl-diphosphate delta-isomerase (357 aa).

12–13 (RK) lines the substrate pocket. Residues serine 70, 71 to 73 (SMT), serine 101, and asparagine 130 contribute to the FMN site. 101-103 (SMR) contacts substrate. Substrate is bound at residue glutamine 165. Residue glutamate 166 participates in Mg(2+) binding. Residues lysine 197 and 310 to 311 (AR) each bind FMN.

This sequence belongs to the IPP isomerase type 2 family. As to quaternary structure, homooctamer. Dimer of tetramers. FMN serves as cofactor. It depends on NADPH as a cofactor. The cofactor is Mg(2+).

It is found in the cytoplasm. It carries out the reaction isopentenyl diphosphate = dimethylallyl diphosphate. Functionally, involved in the biosynthesis of isoprenoids. Catalyzes the 1,3-allylic rearrangement of the homoallylic substrate isopentenyl (IPP) to its allylic isomer, dimethylallyl diphosphate (DMAPP). The polypeptide is Isopentenyl-diphosphate delta-isomerase (Pelodictyon phaeoclathratiforme (strain DSM 5477 / BU-1)).